Consider the following 194-residue polypeptide: Adenylate kinase isoenzyme 1 (194 aa).

M1 carries the N-acetylmethionine modification. Residue 18 to 23 (GSGKGT) participates in ATP binding. Residue S38 is modified to Phosphoserine. The interval 38–67 (STGDLLRAEVSSGSARGKMLSEIMEKGQLV) is NMP. Residues T39, R44, 65–67 (QLV), 94–97 (GYPR), and Q101 each bind AMP. The interval 131–141 (KRGETSGRVDD) is LID. R132 is an ATP binding site. AMP-binding residues include R138 and R149. G177 is an ATP binding site.

It belongs to the adenylate kinase family. AK1 subfamily. In terms of assembly, monomer. Mg(2+) serves as cofactor.

It is found in the cytoplasm. It carries out the reaction a ribonucleoside 5'-phosphate + ATP = a ribonucleoside 5'-diphosphate + ADP. It catalyses the reaction AMP + ATP = 2 ADP. The enzyme catalyses dAMP + ATP = dADP + ADP. The catalysed reaction is dATP + AMP = dADP + ADP. It carries out the reaction dAMP + dATP = 2 dADP. It catalyses the reaction a 2'-deoxyribonucleoside 5'-diphosphate + ATP = a 2'-deoxyribonucleoside 5'-triphosphate + ADP. The enzyme catalyses a ribonucleoside 5'-diphosphate + ATP = a ribonucleoside 5'-triphosphate + ADP. The catalysed reaction is CDP + GTP = CTP + GDP. It carries out the reaction GDP + ATP = GTP + ADP. It catalyses the reaction UDP + ATP = UTP + ADP. The enzyme catalyses GTP + UDP = UTP + GDP. The catalysed reaction is dTDP + GTP = dTTP + GDP. It carries out the reaction dCDP + GTP = dCTP + GDP. It catalyses the reaction dGDP + ATP = dGTP + ADP. The enzyme catalyses dADP + GTP = dATP + GDP. The catalysed reaction is thiamine diphosphate + ADP = thiamine triphosphate + AMP. In terms of biological role, catalyzes the reversible transfer of the terminal phosphate group between ATP and AMP. Also displays broad nucleoside diphosphate kinase activity. Plays an important role in cellular energy homeostasis and in adenine nucleotide metabolism. Also catalyzes at a very low rate the synthesis of thiamine triphosphate (ThTP) from thiamine diphosphate (ThDP) and ADP. The protein is Adenylate kinase isoenzyme 1 of Sus scrofa (Pig).